The following is a 211-amino-acid chain: Small ribosomal subunit protein uS3 (211 aa).

The region spanning 38 to 106 is the KH type-2 domain; that stretch reads LRNFLKKRLY…EVYLNIQEVR (69 aa).

This sequence belongs to the universal ribosomal protein uS3 family. In terms of assembly, part of the 30S ribosomal subunit. Forms a tight complex with proteins S10 and S14.

In terms of biological role, binds the lower part of the 30S subunit head. Binds mRNA in the 70S ribosome, positioning it for translation. The sequence is that of Small ribosomal subunit protein uS3 from Citrifermentans bemidjiense (strain ATCC BAA-1014 / DSM 16622 / JCM 12645 / Bem) (Geobacter bemidjiensis).